The following is a 428-amino-acid chain: 3-phosphoshikimate 1-carboxyvinyltransferase (428 aa).

Positions 21, 22, and 26 each coordinate 3-phosphoshikimate. Phosphoenolpyruvate is bound at residue lysine 21. Residues glycine 91 and arginine 119 each coordinate phosphoenolpyruvate. 3-phosphoshikimate-binding residues include serine 164, glutamine 166, aspartate 313, and lysine 340. Glutamine 166 contributes to the phosphoenolpyruvate binding site. The Proton acceptor role is filled by aspartate 313. Residues arginine 344 and arginine 386 each coordinate phosphoenolpyruvate.

Belongs to the EPSP synthase family. As to quaternary structure, monomer.

The protein localises to the cytoplasm. The catalysed reaction is 3-phosphoshikimate + phosphoenolpyruvate = 5-O-(1-carboxyvinyl)-3-phosphoshikimate + phosphate. It functions in the pathway metabolic intermediate biosynthesis; chorismate biosynthesis; chorismate from D-erythrose 4-phosphate and phosphoenolpyruvate: step 6/7. Functionally, catalyzes the transfer of the enolpyruvyl moiety of phosphoenolpyruvate (PEP) to the 5-hydroxyl of shikimate-3-phosphate (S3P) to produce enolpyruvyl shikimate-3-phosphate and inorganic phosphate. The sequence is that of 3-phosphoshikimate 1-carboxyvinyltransferase from Campylobacter jejuni subsp. jejuni serotype O:23/36 (strain 81-176).